Here is a 258-residue protein sequence, read N- to C-terminus: Acidic leucine-rich nuclear phosphoprotein 32 family member E (258 aa).

N-acetylmethionine is present on Met-1. 4 LRR repeats span residues 18–38 (EVTE…EGLN), 43–64 (ELEF…PSLN), 65–87 (KLRK…AEKC), and 89–110 (NLTY…EALQ). A Glycyl lysine isopeptide (Lys-Gly) (interchain with G-Cter in SUMO2) cross-link involves residue Lys-68. One can recognise an LRRCT domain in the interval 123 to 161 (CEITNLEDYRESIFELLQQITYLDGFDQEDNEAPDSEEE). 2 stretches are compositionally biased toward acidic residues: residues 149 to 206 (DQED…EEEV) and 216 to 238 (IQDE…EEEE). The segment at 149 to 258 (DQEDNEAPDS…AEDDGEEDDD (110 aa)) is disordered. The interval 205–258 (EVGLSYLMKEEIQDEEDDDDYVDEGEEEEEEEEEGPRGEKRKRDAEDDGEEDDD) is ZID domain. Over residues 239 to 249 (GPRGEKRKRDA) the composition is skewed to basic and acidic residues.

It belongs to the ANP32 family. As to quaternary structure, component of a SWR1-like complex, composed of EP400, KAT5/TIP60, TRRAP, BRD8, RUVBL1, RUVBL2, ING3 and ANP32E; the complex does not contain SRCAP. Interacts with H2A.Z/H2AZ1. Interacts with the importin alpha KPNA1 and KPNA2. Post-translationally, phosphorylated. The phosphorylation is nuclear localization signal (NLS)-dependent.

It localises to the cytoplasm. The protein localises to the nucleus. Functionally, histone chaperone that specifically mediates the genome-wide removal of histone H2A.Z/H2AZ1 from the nucleosome: removes H2A.Z/H2AZ1 from its normal sites of deposition, especially from enhancer and insulator regions. Not involved in deposition of H2A.Z/H2AZ1 in the nucleosome. May stabilize the evicted H2A.Z/H2AZ1-H2B dimer, thus shifting the equilibrium towards dissociation and the off-chromatin state. Inhibits activity of protein phosphatase 2A (PP2A). Does not inhibit protein phosphatase 1. May play a role in cerebellar development and synaptogenesis. In Rattus norvegicus (Rat), this protein is Acidic leucine-rich nuclear phosphoprotein 32 family member E (Anp32e).